A 94-amino-acid chain; its full sequence is Small ribosomal subunit protein uS17 (94 aa).

The protein belongs to the universal ribosomal protein uS17 family. As to quaternary structure, part of the 30S ribosomal subunit.

Its function is as follows. One of the primary rRNA binding proteins, it binds specifically to the 5'-end of 16S ribosomal RNA. This Streptomyces griseus subsp. griseus (strain JCM 4626 / CBS 651.72 / NBRC 13350 / KCC S-0626 / ISP 5235) protein is Small ribosomal subunit protein uS17.